A 467-amino-acid polypeptide reads, in one-letter code: H(+)/Cl(-) exchange transporter ClcA (467 aa).

Over 1-30 (MTKRERIIQSVLVKVPKDAINQFLSHGSTP) the chain is Cytoplasmic. A helical membrane pass occupies residues 31–67 (ISVLFLAALVGVLAGLVGTYFEIAVHFVSETRTEWLK). Topologically, residues 68–74 (SEIGHLL) are periplasmic. A helical membrane pass occupies residues 75–98 (PLWLAAILISAALAFVGYFLVHRF). The Selectivity filter part_1 signature appears at 104–108 (GSGIP). Serine 105 is a binding site for chloride. The helical intramembrane region spans 107 to 114 (IPEIEGAM). At 115–121 (DNIRPVR) the chain is on the cytoplasmic side. The next 2 helical transmembrane spans lie at 122–139 (WWRV…ALGS) and 146–164 (EGPT…TDIF). The Selectivity filter part_2 motif lies at 144–148 (GREGP). Residues 165-174 (RVKDDDTRHS) lie on the Cytoplasmic side of the membrane. 2 intramembrane regions (helical) span residues 175 to 187 (LLAS…LAAA) and 191 to 199 (PLAGIMFVV). The Cytoplasmic portion of the chain corresponds to 200–212 (EEMRPQFRYSLIS). Residues 213–230 (IRAVIISAVMANIVFRAI) traverse the membrane as a helical segment. Over 231-250 (NGQDAVITMPQYQPPELKAL) the chain is Periplasmic. The chain crosses the membrane as a helical span at residues 251–279 (WLFLLLGGLFGVFGVLFNKLVTVAQDAFV). Topologically, residues 280–285 (ALHKND) are cytoplasmic. A helical transmembrane segment spans residues 286 to 307 (RKRYLITGTCLGGIFGLLLLYV). The Periplasmic segment spans residues 308–327 (PELTGGGIHLIPDVTNGNYS). 2 helical membrane passes run 328–347 (VSLL…ICFG) and 353–374 (GIFA…ATAK). The short motif at 353–357 (GIFAP) is the Selectivity filter part_3 element. Chloride contacts are provided by isoleucine 354 and phenylalanine 355. Topologically, residues 375-384 (ILLPDLPIEP) are periplasmic. Residues 385 to 399 (GMFAIAGMGALFAAT) constitute an intramembrane region (helical). Residues 400–402 (VRA) constitute an intramembrane region (note=Loop between two helices). Residues 403-414 (PITGILLVIEMT) constitute an intramembrane region (helical). Residues 415–419 (NNYYL) constitute an intramembrane region (note=Loop between two helices). A helical membrane pass occupies residues 420 to 436 (ILPLIITSLGAVICAQI). Topologically, residues 437–467 (CGGKPIYSQLLHRTIKNDKLRQQDLPEQQNS) are cytoplasmic. Chloride is bound at residue tyrosine 443.

This sequence belongs to the chloride channel (TC 2.A.49) family. ClcA subfamily. Homodimer.

Its subcellular location is the cell inner membrane. The enzyme catalyses 2 chloride(in) + H(+)(out) = 2 chloride(out) + H(+)(in). Proton-coupled chloride transporter. Functions as antiport system and exchanges two chloride ions for 1 proton. Probably acts as an electrical shunt for an outwardly-directed proton pump that is linked to amino acid decarboxylation, as part of the extreme acid resistance (XAR) response. The sequence is that of H(+)/Cl(-) exchange transporter ClcA from Vibrio vulnificus (strain CMCP6).